A 244-amino-acid polypeptide reads, in one-letter code: tRNA (guanine-N(7)-)-methyltransferase (244 aa).

Over residues 1-10 (MSDTPQSPAQ) the composition is skewed to polar residues. The disordered stretch occupies residues 1–20 (MSDTPQSPAQDSLAEHDEAR). S-adenosyl-L-methionine contacts are provided by Glu74, Glu99, Asp126, and Asp149. Residue Asp149 is part of the active site. Substrate is bound by residues Lys153, Asp185, and 222–225 (TKFE).

It belongs to the class I-like SAM-binding methyltransferase superfamily. TrmB family.

The catalysed reaction is guanosine(46) in tRNA + S-adenosyl-L-methionine = N(7)-methylguanosine(46) in tRNA + S-adenosyl-L-homocysteine. It functions in the pathway tRNA modification; N(7)-methylguanine-tRNA biosynthesis. Catalyzes the formation of N(7)-methylguanine at position 46 (m7G46) in tRNA. This is tRNA (guanine-N(7)-)-methyltransferase from Pseudomonas aeruginosa (strain ATCC 15692 / DSM 22644 / CIP 104116 / JCM 14847 / LMG 12228 / 1C / PRS 101 / PAO1).